A 91-amino-acid polypeptide reads, in one-letter code: Elongation factor 1-beta (91 aa).

This sequence belongs to the EF-1-beta/EF-1-delta family.

Functionally, promotes the exchange of GDP for GTP in EF-1-alpha/GDP, thus allowing the regeneration of EF-1-alpha/GTP that could then be used to form the ternary complex EF-1-alpha/GTP/AAtRNA. The protein is Elongation factor 1-beta of Thermococcus kodakarensis (strain ATCC BAA-918 / JCM 12380 / KOD1) (Pyrococcus kodakaraensis (strain KOD1)).